The sequence spans 526 residues: MGHGGEGMSLEFTPTWVVAGVCTVIVAISLAVERLLHYFGTVLKKKKQKPLYEALQKVKEELMLLGFISLLLTVFQGLISKFCVKENVLMHMLPCSLDSRREAGASEHKNVTAKEHFQTFLPIVGTTRRLLAEHAAVQVGYCSEKGKVPLLSLEALHHLHIFIFVLAISHVTFCVLTVIFGSTRIHQWKKWEDSIADEKFDPETALRKRRVTHVHNHAFIKEHFLGIGKDSVILGWTQSFLKQFYDSVTKSDYVTLRLGFIMTHCKGNPKLNFHKYMMRALEDDFKQVVGISWYLWIFVVIFLLLNVNGWHTYFWIAFIPFALLLAVGTKLEHVIAQLAHEVAEKHVAIEGDLVVKPSDEHFWFSKPQIVLYLIHFILFQNAFEIAFFFWIWVTYGFDSCIMGQVRYIVPRLVIGVFIQVLCSYSTLPLYAIVSQMGSSFKKAIFEENVQVGLVGWAQKVKQKRDLKAAASNGDEGSSQAGPGPDSGSGSAPAAGPGAGFAGIQLSRVTRNNAGDTNNEITPDHNN.

At 1–11 (MGHGGEGMSLE) the chain is on the extracellular side. A helical transmembrane segment spans residues 12–32 (FTPTWVVAGVCTVIVAISLAV). Residues 33 to 61 (ERLLHYFGTVLKKKKQKPLYEALQKVKEE) lie on the Cytoplasmic side of the membrane. A helical membrane pass occupies residues 62–82 (LMLLGFISLLLTVFQGLISKF). Over 83–160 (CVKENVLMHM…LSLEALHHLH (78 aa)) the chain is Extracellular. The helical transmembrane segment at 161-181 (IFIFVLAISHVTFCVLTVIFG) threads the bilayer. The Cytoplasmic portion of the chain corresponds to 182–287 (STRIHQWKKW…MRALEDDFKQ (106 aa)). The next 2 membrane-spanning stretches (helical) occupy residues 288–308 (VVGISWYLWIFVVIFLLLNVN) and 309–329 (GWHTYFWIAFIPFALLLAVGT). At 330–372 (KLEHVIAQLAHEVAEKHVAIEGDLVVKPSDEHFWFSKPQIVLY) the chain is on the cytoplasmic side. Residues 373–393 (LIHFILFQNAFEIAFFFWIWV) traverse the membrane as a helical segment. Over 394-412 (TYGFDSCIMGQVRYIVPRL) the chain is Extracellular. A helical transmembrane segment spans residues 413-433 (VIGVFIQVLCSYSTLPLYAIV). At 434-526 (SQMGSSFKKA…NNEITPDHNN (93 aa)) the chain is on the cytoplasmic side. The calmodulin-binding stretch occupies residues 447 to 468 (ENVQVGLVGWAQKVKQKRDLKA). Residues 471–526 (SNGDEGSSQAGPGPDSGSGSAPAAGPGAGFAGIQLSRVTRNNAGDTNNEITPDHNN) are disordered. Positions 476 to 495 (GSSQAGPGPDSGSGSAPAAG) are enriched in low complexity. Polar residues predominate over residues 506 to 520 (SRVTRNNAGDTNNEI).

Belongs to the MLO family.

It localises to the cell membrane. In terms of biological role, may be involved in modulation of pathogen defense and leaf cell death. Activity seems to be regulated by Ca(2+)-dependent calmodulin binding and seems not to require heterotrimeric G proteins. The protein is MLO-like protein 1 (MLO1) of Arabidopsis thaliana (Mouse-ear cress).